A 65-amino-acid polypeptide reads, in one-letter code: Large ribosomal subunit protein bL35 (65 aa).

Basic and acidic residues predominate over residues 1–10; it reads MPKMKTDRGA. Residues 1 to 24 are disordered; it reads MPKMKTDRGAAKRFKKTGSGGFKC.

It belongs to the bacterial ribosomal protein bL35 family.

This chain is Large ribosomal subunit protein bL35, found in Tolumonas auensis (strain DSM 9187 / NBRC 110442 / TA 4).